The primary structure comprises 390 residues: Multidrug resistance protein MdtL (390 aa).

12 helical membrane-spanning segments follow: residues 4–24 (FLIC…MYLV), 42–62 (IAFS…GKVA), 69–89 (PVAI…SRAT), 93–113 (LFLT…VVAF), 131–151 (LLNG…HLIM), 158–178 (SLFY…VFIL), 199–221 (LLNR…ILTF), 245–265 (ALTA…LSVF), 269–289 (TLML…SLSS), 293–313 (VTLF…GVAM), 316–336 (ALGP…IAQV), and 353–375 (ALNM…LMTI).

Belongs to the major facilitator superfamily. DHA1 family. MdtL (TC 2.A.1.2.22) subfamily.

It localises to the cell inner membrane. The protein is Multidrug resistance protein MdtL of Citrobacter koseri (strain ATCC BAA-895 / CDC 4225-83 / SGSC4696).